The primary structure comprises 138 residues: Putative pre-16S rRNA nuclease (138 aa).

It belongs to the YqgF nuclease family.

It is found in the cytoplasm. In terms of biological role, could be a nuclease involved in processing of the 5'-end of pre-16S rRNA. This is Putative pre-16S rRNA nuclease from Enterobacter sp. (strain 638).